We begin with the raw amino-acid sequence, 206 residues long: Ectodysplasin-A receptor-associated adapter protein (206 aa).

2 disordered regions span residues 1 to 36 (MRPLQSYKAFEDHMAQEPVEDTDPSTLSFNTSDKYP) and 52 to 77 (TLNCPPNSDMKNQGEENGFPDSTGDP). Polar residues-rich tracts occupy residues 24 to 33 (PSTLSFNTSD) and 52 to 62 (TLNCPPNSDMK). The 77-residue stretch at 114–190 (DVIRIKLDPC…DVEKVLRRWV (77 aa)) folds into the Death domain.

Self-associates and binds to EDAR, TRAF1, TRAF2 and TRAF3.

Its subcellular location is the cytoplasm. Its function is as follows. Adapter protein that interacts with EDAR DEATH domain and couples the receptor to EDA signaling pathway during morphogenesis of ectodermal organs. Mediates the activation of NF-kappa-B. The protein is Ectodysplasin-A receptor-associated adapter protein (EDARADD) of Macaca fascicularis (Crab-eating macaque).